The primary structure comprises 671 residues: Nucleolar GTP-binding protein 1 (671 aa).

The OBG-type G domain occupies 169 to 350 (RTVLICGYPN…VKNAACERLL (182 aa)). GTP is bound by residues 175–182 (GYPNVGKS), 221–225 (DTPGI), and 289–292 (NKTD). Positions 516-671 (VAQNRSTVPR…KRGKGKTDRR (156 aa)) are disordered. The span at 595 to 605 (RAMSISRSQSR) shows a compositional bias: polar residues. Basic residues-rich tracts occupy residues 631–640 (NKSHKKRDKN) and 654–671 (RPKH…TDRR).

Belongs to the TRAFAC class OBG-HflX-like GTPase superfamily. OBG GTPase family. NOG subfamily.

The protein resides in the nucleus. Its subcellular location is the nucleolus. In terms of biological role, involved in the biogenesis of the 60S ribosomal subunit. The chain is Nucleolar GTP-binding protein 1 from Arabidopsis thaliana (Mouse-ear cress).